A 349-amino-acid polypeptide reads, in one-letter code: Protein MULTIPLE CHLOROPLAST DIVISION SITE 1 (349 aa).

Residues 1–52 (MASIDSLQFHSLCNLQSSIGRAKLQNPSSLVIFRRRPVNLNWVQFETKGSFV) constitute a chloroplast transit peptide. Residues 53–116 (CKAIGDSSTP…VVFLMKKCSV (64 aa)) are Chloroplast intermembrane-facing. Residues 117-139 (NSIWIGVCITATVLVAAIRAYVV) traverse the membrane as a helical segment. Topologically, residues 140–349 (RKSRDNQRAG…NSSSEETHKS (210 aa)) are stromal. Residues 315-349 (QRPYKFSAKLEGENIQKNSQENHTGNSSSEETHKS) are disordered. Residues 329–343 (IQKNSQENHTGNSSS) show a composition bias toward polar residues.

In terms of assembly, interacts with MIND1. Interacts with ARC6 in the chloroplast stroma and binds to FtsZ2-1 in an ARC6-dependent manner.

It localises to the plastid. The protein resides in the chloroplast inner membrane. Required for chloroplast division. Together with MIND1 and ARC3, regulates FtsZ ring positioning in chloroplasts in an ARC6-dependent manner. Determines the site of chloroplast division in concert with MIND1. Not directly involved in ring formation, but required for MIND1 and MINE1 localization to regulate FtsZ ring formation during plastidial constriction. The polypeptide is Protein MULTIPLE CHLOROPLAST DIVISION SITE 1 (Arabidopsis thaliana (Mouse-ear cress)).